The primary structure comprises 144 residues: Large ribosomal subunit protein uL15 (144 aa).

The disordered stretch occupies residues 1 to 54 (MRLNTLSPAAGAKHAPKRVGRGMGSGLGKTAGRGHKGQKSRSGGGVRPGFEGGQ). Gly residues-rich tracts occupy residues 21 to 31 (RGMGSGLGKTA) and 42 to 52 (SGGGVRPGFEG).

Belongs to the universal ribosomal protein uL15 family. In terms of assembly, part of the 50S ribosomal subunit.

In terms of biological role, binds to the 23S rRNA. In Shewanella oneidensis (strain ATCC 700550 / JCM 31522 / CIP 106686 / LMG 19005 / NCIMB 14063 / MR-1), this protein is Large ribosomal subunit protein uL15.